The sequence spans 286 residues: Tryptophan 2,3-dioxygenase (286 aa).

Residues 53-57 (FIVQH), Y115, and R119 each bind substrate. Residue H242 coordinates heme. T256 is a substrate binding site.

It belongs to the tryptophan 2,3-dioxygenase family. Homotetramer. Heme serves as cofactor.

The catalysed reaction is L-tryptophan + O2 = N-formyl-L-kynurenine. The protein operates within amino-acid degradation; L-tryptophan degradation via kynurenine pathway; L-kynurenine from L-tryptophan: step 1/2. Heme-dependent dioxygenase that catalyzes the oxidative cleavage of the L-tryptophan (L-Trp) pyrrole ring and converts L-tryptophan to N-formyl-L-kynurenine. Catalyzes the oxidative cleavage of the indole moiety. The polypeptide is Tryptophan 2,3-dioxygenase (Kineococcus radiotolerans (strain ATCC BAA-149 / DSM 14245 / SRS30216)).